The following is a 60-amino-acid chain: Large ribosomal subunit protein uL30 (60 aa).

Belongs to the universal ribosomal protein uL30 family. As to quaternary structure, part of the 50S ribosomal subunit.

The polypeptide is Large ribosomal subunit protein uL30 (Streptococcus equi subsp. equi (strain 4047)).